Here is a 123-residue protein sequence, read N- to C-terminus: Fluoride-specific ion channel FluC 1 (123 aa).

The next 4 helical transmembrane spans lie at 1–21 (MVDL…RYTL), 34–54 (PLAT…LYGF), 59–79 (VIWL…STYI), and 99–119 (LTSI…ANFF). Gly-70 and Thr-73 together coordinate Na(+).

Belongs to the fluoride channel Fluc/FEX (TC 1.A.43) family.

The protein resides in the cell membrane. The enzyme catalyses fluoride(in) = fluoride(out). Na(+) is not transported, but it plays an essential structural role and its presence is essential for fluoride channel function. Its function is as follows. Fluoride-specific ion channel. Important for reducing fluoride concentration in the cell, thus reducing its toxicity. This chain is Fluoride-specific ion channel FluC 1, found in Carboxydothermus hydrogenoformans (strain ATCC BAA-161 / DSM 6008 / Z-2901).